The following is a 345-amino-acid chain: Ryncolin-1 (345 aa).

An N-terminal signal peptide occupies residues 1-19; that stretch reads MKPWAAFHLIFLVASSLEG. The tract at residues 48 to 118 is disordered; sequence ILQSQPGIPG…DKGDKGEDCN (71 aa). One can recognise a Collagen-like domain in the interval 57–114; sequence GIPGVPGTNGSEGLKGDPGPQGPPGIRGPDGIRGEAGPKGDKGDQGDKGDKGDKGDKG. The segment covering 86–116 has biased composition (basic and acidic residues); sequence DGIRGEAGPKGDKGDQGDKGDKGDKGDKGED. Residues 121-339 enclose the Fibrinogen C-terminal domain; the sequence is GCLPTEVRNC…YADMKIRPQQ (219 aa). Cystine bridges form between C130-C158 and C282-C295.

This sequence belongs to the ficolin lectin family. Veficolin subfamily. Hydroxylated, possibly at Pro-80. As to expression, expressed by the venom duct.

It is found in the secreted. Initiates complement activation and/or interferes in platelet aggregation and/or blood coagulation. In Cerberus rynchops (Dog-faced water snake), this protein is Ryncolin-1.